A 200-amino-acid polypeptide reads, in one-letter code: Pyridoxal 5'-phosphate synthase subunit PdxT (200 aa).

52 to 54 contacts L-glutamine; sequence GES. C84 acts as the Nucleophile in catalysis. Residues R116 and 145-146 contribute to the L-glutamine site; that span reads IR. Catalysis depends on charge relay system residues H181 and E183.

It belongs to the glutaminase PdxT/SNO family. In terms of assembly, in the presence of PdxS, forms a dodecamer of heterodimers. Only shows activity in the heterodimer.

The enzyme catalyses aldehydo-D-ribose 5-phosphate + D-glyceraldehyde 3-phosphate + L-glutamine = pyridoxal 5'-phosphate + L-glutamate + phosphate + 3 H2O + H(+). It catalyses the reaction L-glutamine + H2O = L-glutamate + NH4(+). Its pathway is cofactor biosynthesis; pyridoxal 5'-phosphate biosynthesis. In terms of biological role, catalyzes the hydrolysis of glutamine to glutamate and ammonia as part of the biosynthesis of pyridoxal 5'-phosphate. The resulting ammonia molecule is channeled to the active site of PdxS. The polypeptide is Pyridoxal 5'-phosphate synthase subunit PdxT (Sulfurisphaera tokodaii (strain DSM 16993 / JCM 10545 / NBRC 100140 / 7) (Sulfolobus tokodaii)).